Reading from the N-terminus, the 80-residue chain is uncharacterized protein (80 aa).

The helical transmembrane segment at 10–29 threads the bilayer; it reads FVAREYPLVVVPFIYFVLFL.

It localises to the membrane. This is an uncharacterized protein from Saccharomyces cerevisiae (strain ATCC 204508 / S288c) (Baker's yeast).